A 1040-amino-acid chain; its full sequence is Multidrug resistance protein MdtB (1040 aa).

12 consecutive transmembrane segments (helical) span residues 25–45 (LLMAAILLAGIIGYRFLPVAA), 347–367 (LMLAIALVVMIIYLFLRNIPA), 369–389 (IIPGVAVPLSLIGTFAVMVFL), 396–416 (LTLMALTIATGFVVDDAIVVI), 440–460 (IGFTIISLTFSLIAVLIPLLF), 472–492 (FAVTLAVAILISAVVSLTLTP), 537–557 (WLTLSVAFATLLLSVMLWIVI), 863–883 (LGSTVWLIVAAVVAMYIVLGV), 888–908 (FIHPITILSTLPTAGVGALLA), 910–930 (IIAGSELDIIAIIGIILLIGI), 968–988 (ILMTTLAALLGALPLMLSTGV), and 998–1018 (IAMVGGLLVSQVLTLFTTPVI).

It belongs to the resistance-nodulation-cell division (RND) (TC 2.A.6) family. MdtB subfamily. In terms of assembly, part of a tripartite efflux system composed of MdtA, MdtB and MdtC. MdtB forms a heteromultimer with MdtC.

It localises to the cell inner membrane. The chain is Multidrug resistance protein MdtB from Salmonella agona (strain SL483).